The primary structure comprises 466 residues: MRCLNMIMAEPPGLITICLLGYLLGADCTVFLDHEDATKVLSRPKRYNSGKLEEFVQGNLERECMEEKCSFEEAREVFENTEKTTEFWKQYVDGDQCESNPCLNGGICKDDINSYECWCQTGFEGKNCELDVTCNIKNGRCKQFCKLDADNKVVCSCTTGYQLAEDQKSCEPAVPFPCGRVSVPHISTTHTRAETLFLNMDYENSTTDYENSAEAEKNVDNVTQPLNDLTRIVGGKTAKPGQFPWQVLLKGKIDAFCGGSIINEKWVVTAAHCINPDVEITVVAGEHNTEETEHTEQKRNVIRTILHHSYNASVNKYSHDIALLELDEPLTLNSYVTPICVADREYTNTFLKFGYGYVSGWGKVFNKGRPATILQYLKVPLVDRATCLRSTKFTIYNNMFCAGFHEGGKDSCQGDSGGPHVTEVEGINFLTGIISWGEECAMKGKYGIYTKVSRYVNWIKEKTKLT.

The first 25 residues, 1 to 25 (MRCLNMIMAEPPGLITICLLGYLLG), serve as a signal peptide directing secretion. The propeptide occupies 26–46 (ADCTVFLDHEDATKVLSRPKR). Ca(2+) is bound by residues Tyr-47, Asn-48, Glu-53, Glu-54, Glu-61, Glu-63, Glu-66, Glu-67, Glu-72, Glu-73, and Glu-76. One can recognise a Gla domain in the interval 47–92 (YNSGKLEEFVQGNLERECMEEKCSFEEAREVFENTEKTTEFWKQYV). 4-carboxyglutamate is present on residues Glu-53, Glu-54, Glu-61, Glu-63, Glu-66, Glu-67, Glu-72, Glu-73, Glu-76, Glu-79, and Glu-82. Residue Glu-61 coordinates Mg(2+). Cys-64 and Cys-69 form a disulfide bridge. Glu-66 is a Mg(2+) binding site. Glu-72 contributes to the Mg(2+) binding site. A Mg(2+)-binding site is contributed by Glu-76. Glu-82 is a binding site for Ca(2+). Residue Glu-82 coordinates Mg(2+). O-linked (GalNAc...) threonine glycosylation is present at Thr-85. The Ca(2+) site is built by Glu-86, Asp-93, Gly-94, and Gln-96. The residue at position 86 (Glu-86) is a 4-carboxyglutamate. A Mg(2+)-binding site is contributed by Glu-86. The EGF-like 1; calcium-binding domain maps to 93–129 (DGDQCESNPCLNGGICKDDINSYECWCQTGFEGKNCE). Disulfide bonds link Cys-97–Cys-108, Cys-102–Cys-117, Cys-119–Cys-128, Cys-134–Cys-145, Cys-141–Cys-155, Cys-157–Cys-170, Cys-178–Cys-340, Cys-257–Cys-273, Cys-387–Cys-401, and Cys-412–Cys-440. Ser-99 is a glycosylation site (O-linked (Glc...) serine). 2 residues coordinate Ca(2+): Asp-110 and Asp-111. At Asp-110 the chain carries (3R)-3-hydroxyaspartate. The residue at position 114 (Ser-114) is a Phosphoserine. Residues 130–171 (LDVTCNIKNGRCKQFCKLDADNKVVCSCTTGYQLAEDQKSCE) enclose the EGF-like 2 domain. Residues 193 to 231 (AETLFLNMDYENSTTDYENSAEAEKNVDNVTQPLNDLTR) constitute a propeptide, activation peptide. Tyr-202 is modified (sulfotyrosine). At Ser-205 the chain carries Phosphoserine. Thr-206 carries the post-translational modification Phosphothreonine; alternate. Thr-206 carries an O-linked (GalNAc...) threonine; alternate glycan. Asn-221 carries N-linked (GlcNAc...) asparagine glycosylation. Residues Thr-223 and Thr-230 are each glycosylated (O-linked (GalNAc...) threonine). The Peptidase S1 domain maps to 232-464 (IVGGKTAKPG…YVNWIKEKTK (233 aa)). His-272 acts as the Charge relay system in catalysis. Ca(2+) is bound by residues Glu-286, Asn-288, Glu-291, Glu-293, and Glu-296. The active-site Charge relay system is Asp-320. Ser-416 acts as the Charge relay system in catalysis.

The protein belongs to the peptidase S1 family. In terms of assembly, heterodimer of a light chain and a heavy chain; disulfide-linked. Interacts (inactive and activated) with F11 (activated) in calcium-dependent manner. Interacts with SERPINC1. Post-translationally, the iron and 2-oxoglutarate dependent 3-hydroxylation of aspartate and asparagine is (R) stereospecific within EGF domains. Activated by factor XIa, which excises the activation peptide. The propeptide can also be removed by snake venom protease. Activated by coagulation factor VIIa-tissue factor (F7-F3) complex in calcium-dependent manner. In terms of processing, predominantly O-glucosylated at Ser-99 by POGLUT1 in vitro.

Its subcellular location is the secreted. The catalysed reaction is Selective cleavage of Arg-|-Ile bond in factor X to form factor Xa.. In terms of biological role, factor IX is a vitamin K-dependent plasma protein that participates in the intrinsic pathway of blood coagulation by converting factor X to its active form in the presence of Ca(2+) ions, phospholipids, and factor VIIIa. This is Coagulation factor IX (F9) from Felis catus (Cat).